We begin with the raw amino-acid sequence, 220 residues long: Octanoyltransferase (220 aa).

The BPL/LPL catalytic domain occupies P27 to V208. Residues R66 to H73, A139 to G141, and G152 to A154 contribute to the substrate site. Catalysis depends on C170, which acts as the Acyl-thioester intermediate.

It belongs to the LipB family.

The protein localises to the cytoplasm. It catalyses the reaction octanoyl-[ACP] + L-lysyl-[protein] = N(6)-octanoyl-L-lysyl-[protein] + holo-[ACP] + H(+). Its pathway is protein modification; protein lipoylation via endogenous pathway; protein N(6)-(lipoyl)lysine from octanoyl-[acyl-carrier-protein]: step 1/2. In terms of biological role, catalyzes the transfer of endogenously produced octanoic acid from octanoyl-acyl-carrier-protein onto the lipoyl domains of lipoate-dependent enzymes. Lipoyl-ACP can also act as a substrate although octanoyl-ACP is likely to be the physiological substrate. The protein is Octanoyltransferase of Bordetella bronchiseptica (strain ATCC BAA-588 / NCTC 13252 / RB50) (Alcaligenes bronchisepticus).